The chain runs to 85 residues: Progonadoliberin-2 (85 aa).

Residues 1-23 (MCVSRLALLLGLLLCVGAQLSFA) form the signal peptide. Gln-24 bears the Pyrrolidone carboxylic acid mark. A Glycine amide modification is found at Gly-33.

Belongs to the GnRH family. As to expression, expressed in only one cell group in the mesencephalon.

Its subcellular location is the secreted. Stimulates the secretion of gonadotropins. The protein is Progonadoliberin-2 (gnrh2) of Haplochromis burtoni (Burton's mouthbrooder).